A 318-amino-acid polypeptide reads, in one-letter code: UDP-3-O-acylglucosamine N-acyltransferase (318 aa).

The active-site Proton acceptor is histidine 231.

The protein belongs to the transferase hexapeptide repeat family. LpxD subfamily. In terms of assembly, homotrimer.

It carries out the reaction a UDP-3-O-[(3R)-3-hydroxyacyl]-alpha-D-glucosamine + a (3R)-hydroxyacyl-[ACP] = a UDP-2-N,3-O-bis[(3R)-3-hydroxyacyl]-alpha-D-glucosamine + holo-[ACP] + H(+). It functions in the pathway bacterial outer membrane biogenesis; LPS lipid A biosynthesis. Functionally, catalyzes the N-acylation of UDP-3-O-acylglucosamine using 3-hydroxyacyl-ACP as the acyl donor. Is involved in the biosynthesis of lipid A, a phosphorylated glycolipid that anchors the lipopolysaccharide to the outer membrane of the cell. This is UDP-3-O-acylglucosamine N-acyltransferase from Campylobacter jejuni subsp. doylei (strain ATCC BAA-1458 / RM4099 / 269.97).